A 282-amino-acid polypeptide reads, in one-letter code: Undecaprenyl-diphosphatase (282 aa).

Helical transmembrane passes span 6-26 (LYFVKAFFLGIIEGLTEFIPV), 45-65 (SGKVFEVVIQLGAILAVMWIF), 85-105 (LFTRNLLLAFFPAAIIGAIFI), 112-132 (FYHPGVVAVTLVLGGLIMLWV), 200-220 (ATEFSFFLAMPTMLGAAVYDM), 230-250 (HDLGAIAVGFVAAFLSALLVV), and 262-282 (YRGFAWYRIALGVVVAAWLAF).

Belongs to the UppP family.

The protein localises to the cell inner membrane. The enzyme catalyses di-trans,octa-cis-undecaprenyl diphosphate + H2O = di-trans,octa-cis-undecaprenyl phosphate + phosphate + H(+). Catalyzes the dephosphorylation of undecaprenyl diphosphate (UPP). Confers resistance to bacitracin. In Bordetella avium (strain 197N), this protein is Undecaprenyl-diphosphatase.